Consider the following 390-residue polypeptide: Acid protease (390 aa).

Positions 1-18 (MLFSKSLLLSVLASLSFA) are cleaved as a signal peptide. Positions 75–386 (YLTTIEIGTP…DIDNSQVGIA (312 aa)) constitute a Peptidase A1 domain. Residues D93 and D282 contribute to the active site.

Belongs to the peptidase A1 family.

In Saccharomycopsis fibuligera (Yeast), this protein is Acid protease (PEP1).